A 248-amino-acid chain; its full sequence is Cell division protein FtsQ (248 aa).

The Cytoplasmic segment spans residues 1 to 4; sequence MGTR. Residues 5-25 form a helical membrane-spanning segment; the sequence is LRALLGVLILLVLGGAGWLFL. The Periplasmic segment spans residues 26 to 248; that stretch reads RWEPTLLPIR…RVAARAGNRR (223 aa). The 70-residue stretch at 32-101 folds into the POTRA domain; that stretch reads LPIRLIQIEG…DTLRVQVREY (70 aa).

It belongs to the FtsQ/DivIB family. FtsQ subfamily. In terms of assembly, part of a complex composed of FtsB, FtsL and FtsQ.

It is found in the cell inner membrane. Its function is as follows. Essential cell division protein. May link together the upstream cell division proteins, which are predominantly cytoplasmic, with the downstream cell division proteins, which are predominantly periplasmic. May control correct divisome assembly. The chain is Cell division protein FtsQ from Allochromatium vinosum (strain ATCC 17899 / DSM 180 / NBRC 103801 / NCIMB 10441 / D) (Chromatium vinosum).